We begin with the raw amino-acid sequence, 504 residues long: Probable alpha-L-arabinofuranosidase C (504 aa).

Asparagine 152, asparagine 181, and asparagine 269 each carry an N-linked (GlcNAc...) asparagine glycan.

It belongs to the glycosyl hydrolase 51 family.

The protein resides in the secreted. It catalyses the reaction Hydrolysis of terminal non-reducing alpha-L-arabinofuranoside residues in alpha-L-arabinosides.. It participates in glycan metabolism; L-arabinan degradation. Its function is as follows. Alpha-L-arabinofuranosidase involved in the degradation of arabinoxylan, a major component of plant hemicellulose. Acts only on small linear 1,5-alpha-linked L-arabinofuranosyl oligosaccharides. The polypeptide is Probable alpha-L-arabinofuranosidase C (abfC) (Aspergillus flavus (strain ATCC 200026 / FGSC A1120 / IAM 13836 / NRRL 3357 / JCM 12722 / SRRC 167)).